The primary structure comprises 289 residues: D-alanine aminotransferase (289 aa).

Residue Tyr-31 participates in substrate binding. Arg-50 is a pyridoxal 5'-phosphate binding site. Residues Arg-99 and His-101 each contribute to the substrate site. The Proton acceptor role is filled by Lys-147. N6-(pyridoxal phosphate)lysine is present on Lys-147. Glu-179 is a pyridoxal 5'-phosphate binding site.

It belongs to the class-IV pyridoxal-phosphate-dependent aminotransferase family. As to quaternary structure, homodimer. The cofactor is pyridoxal 5'-phosphate.

It catalyses the reaction D-alanine + 2-oxoglutarate = D-glutamate + pyruvate. Functionally, acts on the D-isomers of alanine, leucine, aspartate, glutamate, aminobutyrate, norvaline and asparagine. The enzyme transfers an amino group from a substrate D-amino acid to the pyridoxal phosphate cofactor to form pyridoxamine and an alpha-keto acid in the first half-reaction. The second half-reaction is the reverse of the first, transferring the amino group from the pyridoxamine to a second alpha-keto acid to form the product D-amino acid via a ping-pong mechanism. This is an important process in the formation of D-alanine and D-glutamate, which are essential bacterial cell wall components. The chain is D-alanine aminotransferase (dat) from Listeria monocytogenes serotype 4b (strain F2365).